The chain runs to 579 residues: MDDELRDRITEAAETNALLNAVKHDSEAQVGAIMGPLMGENPEFREYGDEIPGVIAPVVERVNGMDAEERRERLAELAPEKLEELEAEDEGEDHPLPDLPSAEEYDTVRMRVAPNPNGPWHIGHARMAAVVGTYKQRYDGEFICRFDDTDPETKRPDLDAYDAILDAIDYLGFEPDDVVNASDRVETYYEYARKLIDKGGAYTCSCPQGEFSDLKNNGEACPHRDKDAETTRSEFEAMVDGEYDSGEMVLRVRTDITHKNPALRDFVAFRMVDTPHPREAAEQYRCWPMLDFQSGLDDHLLGVTHIIRGIDLQDSAKRQQFVYDYFDWEYPEVIHWGHVQVDEYDVPLSTSSIAELIEDGELAGWDDPRAPTVASLERRGIRGEAVVDAMIQLGTSTSNVDLAMSSIYSNNRDLIDDDSDRAFFVRDSDDHGGLVERQIVGGPDAGEPPLHPDYEERGRREIPVTSGVVVEGDDLPDHGDRIWLKGYGCVRHTRDAFEYTGDDIDAVREEGVDVIHWAPADGPALRLRTMDGDVSGVAEPGLRNYDTDDVVQFERIGFARLDKVADDSDTESVAYFTHP.

Positions 114–124 (PNPNGPWHIGH) match the 'HIGH' region motif.

It belongs to the class-I aminoacyl-tRNA synthetase family. Glutamate--tRNA ligase type 2 subfamily.

It localises to the cytoplasm. It carries out the reaction tRNA(Glu) + L-glutamate + ATP = L-glutamyl-tRNA(Glu) + AMP + diphosphate. Its function is as follows. Catalyzes the attachment of glutamate to tRNA(Glu) in a two-step reaction: glutamate is first activated by ATP to form Glu-AMP and then transferred to the acceptor end of tRNA(Glu). This chain is Glutamate--tRNA ligase, found in Haloarcula marismortui (strain ATCC 43049 / DSM 3752 / JCM 8966 / VKM B-1809) (Halobacterium marismortui).